The following is a 98-amino-acid chain: MTKSELIAELAAANPHLLSRDVELIVQTIFSEISAALARGDRVELRGFGAFTVKKRDARTGRNPRTGEMVAVDEKVVPFFKAGKELRERVNNGAPAED.

The protein belongs to the bacterial histone-like protein family. In terms of assembly, heterodimer of an alpha and a beta chain.

This protein is one of the two subunits of integration host factor, a specific DNA-binding protein that functions in genetic recombination as well as in transcriptional and translational control. The protein is Integration host factor subunit beta of Gluconacetobacter diazotrophicus (strain ATCC 49037 / DSM 5601 / CCUG 37298 / CIP 103539 / LMG 7603 / PAl5).